We begin with the raw amino-acid sequence, 427 residues long: Inward rectifier potassium channel 2 (427 aa).

The Cytoplasmic portion of the chain corresponds to 1–81 (MGSVRTNRYS…IFTTCVDIRW (81 aa)). C76 is subject to S-nitrosocysteine. The chain crosses the membrane as a helical span at residues 82 to 106 (RWMLVIFCLAFVLSWLFFGCVFWLI). Topologically, residues 107 to 128 (ALLHGDLDASKESKACVSEVNS) are extracellular. Positions 129 to 140 (FTAAFLFSIETQ) form an intramembrane region, helical; Pore-forming. The segment at residues 141 to 147 (TTIGYGF) is an intramembrane region (pore-forming). The Selectivity filter signature appears at 142–147 (TIGYGF). The Extracellular portion of the chain corresponds to 148–156 (RCVTDECPV). Residues 157–178 (AVFMVVFQSIVGCIIDAFIIGA) traverse the membrane as a helical segment. The Cytoplasmic segment spans residues 179 to 427 (VMAKMAKPKK…PRPLRRESEI (249 aa)). Positions 181–208 (AKMAKPKKRNETLVFSHNAVIAMRDGKL) are polyphosphoinositide (PIP2)-binding. The segment at 384 to 427 (SKEEDDSENGVPESTSTDTPPDIDLHNQASVPLEPRPLRRESEI) is disordered. The short motif at 425–427 (SEI) is the PDZ-binding element.

The protein belongs to the inward rectifier-type potassium channel (TC 1.A.2.1) family. KCNJ2 subfamily. In terms of assembly, homotetramer. Homomultimeric and heteromultimeric association with KCNJ4/Kir2.3. Can form heteromeric channels with Kir2.6/KCNJ18. Associates, via its PDZ-recognition domain, with a complex containing LIN7A, LIN7B, LIN7C, DLG1, CASK and APBA1. Post-translationally, S-nitrosylation increases the open probability and inward rectifying currents.

The protein localises to the cell membrane. It localises to the sarcolemma. The protein resides in the T-tubule. It catalyses the reaction K(+)(in) = K(+)(out). Activated by phosphatidylinositol 4,5 biphosphate (PtdIns(4,5)P2). Functionally, inward rectifier potassium channels are characterized by a greater tendency to allow potassium to flow into the cell rather than out of it. Their voltage dependence is regulated by the concentration of extracellular potassium; as external potassium is raised, the voltage range of the channel opening shifts to more positive voltages. The inward rectification is mainly due to the blockage of outward current by internal magnesium. Can be blocked by extracellular barium and cesium. Probably participates in establishing action potential waveform and excitability of neuronal and muscle tissues. In Bos taurus (Bovine), this protein is Inward rectifier potassium channel 2 (KCNJ2).